A 113-amino-acid chain; its full sequence is Endoribonuclease SymE (113 aa).

The region spanning 29–74 (SRYPDYSRIPAITLKGQWLEAAGFATGTAIDVKVMEGCIVLTAQPP) is the SpoVT-AbrB domain.

It belongs to the SymE family.

It localises to the cytoplasm. Its function is as follows. Involved in the degradation and recycling of damaged RNA. It is itself a target for degradation by the ATP-dependent protease Lon. This is Endoribonuclease SymE from Escherichia coli O1:K1 / APEC.